The following is a 183-amino-acid chain: tRNA-splicing endonuclease (183 aa).

Active-site residues include Tyr120, His128, and Lys159.

Belongs to the tRNA-intron endonuclease family. Archaeal short subfamily. As to quaternary structure, homotetramer; although the tetramer contains four active sites, only two participate in the cleavage. Therefore, it should be considered as a dimer of dimers.

The enzyme catalyses pretRNA = a 3'-half-tRNA molecule with a 5'-OH end + a 5'-half-tRNA molecule with a 2',3'-cyclic phosphate end + an intron with a 2',3'-cyclic phosphate and a 5'-hydroxyl terminus.. Its function is as follows. Endonuclease that removes tRNA introns. Cleaves pre-tRNA at the 5'- and 3'-splice sites to release the intron. The products are an intron and two tRNA half-molecules bearing 2',3' cyclic phosphate and 5'-OH termini. Recognizes a pseudosymmetric substrate in which 2 bulged loops of 3 bases are separated by a stem of 4 bp. In Pyrobaculum aerophilum (strain ATCC 51768 / DSM 7523 / JCM 9630 / CIP 104966 / NBRC 100827 / IM2), this protein is tRNA-splicing endonuclease.